A 164-amino-acid chain; its full sequence is Phosphopantetheine adenylyltransferase (164 aa).

Residue serine 9 coordinates substrate. ATP is bound by residues serine 9 to phenylalanine 10 and histidine 17. Residues lysine 41, leucine 73, and lysine 87 each coordinate substrate. ATP is bound by residues glycine 88 to arginine 90, glutamate 98, and tyrosine 122 to serine 128.

Belongs to the bacterial CoaD family. In terms of assembly, homohexamer. Mg(2+) is required as a cofactor.

It localises to the cytoplasm. It carries out the reaction (R)-4'-phosphopantetheine + ATP + H(+) = 3'-dephospho-CoA + diphosphate. It participates in cofactor biosynthesis; coenzyme A biosynthesis; CoA from (R)-pantothenate: step 4/5. Functionally, reversibly transfers an adenylyl group from ATP to 4'-phosphopantetheine, yielding dephospho-CoA (dPCoA) and pyrophosphate. The chain is Phosphopantetheine adenylyltransferase from Rhodococcus jostii (strain RHA1).